The chain runs to 348 residues: 3-isopropylmalate dehydrogenase (348 aa).

Residue 76–87 (GPKWTDPNNRPE) coordinates NAD(+). The substrate site is built by R94, R104, R132, and D217. Residues D217, D241, and D245 each contribute to the Mg(2+) site. Residue 275–287 (GSAPDIAGKNVAN) coordinates NAD(+).

It belongs to the isocitrate and isopropylmalate dehydrogenases family. LeuB type 1 subfamily. As to quaternary structure, homodimer. The cofactor is Mg(2+). Requires Mn(2+) as cofactor.

It localises to the cytoplasm. The enzyme catalyses (2R,3S)-3-isopropylmalate + NAD(+) = 4-methyl-2-oxopentanoate + CO2 + NADH. Its pathway is amino-acid biosynthesis; L-leucine biosynthesis; L-leucine from 3-methyl-2-oxobutanoate: step 3/4. Catalyzes the oxidation of 3-carboxy-2-hydroxy-4-methylpentanoate (3-isopropylmalate) to 3-carboxy-4-methyl-2-oxopentanoate. The product decarboxylates to 4-methyl-2 oxopentanoate. This Staphylococcus aureus (strain COL) protein is 3-isopropylmalate dehydrogenase.